Reading from the N-terminus, the 157-residue chain is Pyruvoyl-dependent arginine decarboxylase (157 aa).

Ser44 bears the Pyruvic acid (Ser) mark.

Belongs to the PdaD family. The cofactor is pyruvate.

The enzyme catalyses L-arginine + H(+) = agmatine + CO2. This chain is Pyruvoyl-dependent arginine decarboxylase, found in Thermococcus kodakarensis (strain ATCC BAA-918 / JCM 12380 / KOD1) (Pyrococcus kodakaraensis (strain KOD1)).